Reading from the N-terminus, the 232-residue chain is Platelet-activating factor acetylhydrolase IB subunit alpha1 (232 aa).

The interval Met-1–Gly-20 is disordered. Position 2 is an N-acetylserine (Ser-2). A Phosphoserine modification is found at Ser-2. Residues Ser-48, Asp-193, and His-196 contribute to the active site.

It belongs to the 'GDSL' lipolytic enzyme family. Platelet-activating factor acetylhydrolase IB beta/gamma subunits subfamily. In terms of assembly, forms a catalytic dimer which is either homodimer (alpha1/alpha1 homodimer) or heterodimer with PAFAH1B2 (alpha1/alpha2 heterodimer). Component of the cytosolic (PAF-AH (I)) heterotetrameric enzyme, which is composed of PAFAH1B1 (beta), PAFAH1B2 (alpha2) and PAFAH1B3 (alpha1) subunits. The catalytic activity of the enzyme resides in the alpha1 (PAFAH1B3) and alpha2 (PAFAH1B2) subunits, whereas the beta subunit (PAFAH1B1) has regulatory activity. Trimer formation is not essential for the catalytic activity. Interacts with VLDLR; this interaction may modulate the Reelin pathway. In terms of tissue distribution, expressed in brain, spleen, lung, liver, kidney and testis. Not expressed in heart and skeletal muscle. Expressed in fetal brain as heterodimer. Not expressed in adult tissues. Expressed exclusively in granule cells.

The protein localises to the cytoplasm. The enzyme catalyses a 1-O-alkyl-2-acetyl-sn-glycero-3-phosphocholine + H2O = a 1-O-alkyl-sn-glycero-3-phosphocholine + acetate + H(+). The catalysed reaction is 1-O-hexadecyl-2-acetyl-sn-glycero-3-phosphocholine + H2O = 1-O-hexadecyl-sn-glycero-3-phosphocholine + acetate + H(+). It catalyses the reaction 1-O-hexadecyl-2-acetyl-sn-glycero-3-phosphate + H2O = 1-O-hexadecyl-sn-glycero-3-phosphate + acetate + H(+). Beta subunit (PAFAH1B1) inhibits the acetylhydrolase activity of the alpha1/alpha1 catalytic homodimer. Alpha1 catalytic subunit of the cytosolic type I platelet-activating factor (PAF) acetylhydrolase (PAF-AH (I)) heterotetrameric enzyme that catalyzes the hydrolyze of the acetyl group at the sn-2 position of PAF and its analogs and modulates the action of PAF. The activity and substrate specificity of PAF-AH (I) are affected by its subunit composition. Both alpha1/alpha1 homodimer (PAFAH1B3/PAFAH1B3 homodimer) and alpha1/alpha2 heterodimer(PAFAH1B3/PAFAH1B2 heterodimer) hydrolyze 1-O-alkyl-2-acetyl-sn-glycero-3-phosphoric acid (AAGPA) more efficiently than PAF, but they have little hydrolytic activity towards 1-O-alkyl-2-acetyl-sn-glycero-3-phosphorylethanolamine (AAGPE). Plays an important role during the development of brain. The polypeptide is Platelet-activating factor acetylhydrolase IB subunit alpha1 (Rattus norvegicus (Rat)).